A 366-amino-acid polypeptide reads, in one-letter code: Histone-lysine N-methyltransferase SETD7 (366 aa).

MORN repeat units lie at residues 36-58 (FEGN…DGST), 59-81 (LEGY…DGGV), and 106-128 (FKGQ…DGGS). One can recognise an SET domain in the interval 214 to 336 (ERVYVADSLI…AEEELTVAYG (123 aa)). Residues 226 to 228 (AGE), N296, H297, and E356 contribute to the S-adenosyl-L-methionine site.

It belongs to the class V-like SAM-binding methyltransferase superfamily. Histone-lysine methyltransferase family. SET7 subfamily. As to quaternary structure, interacts with IPF1/PDX-1.

Its subcellular location is the nucleus. The protein localises to the chromosome. It carries out the reaction L-lysyl(4)-[histone H3] + S-adenosyl-L-methionine = N(6)-methyl-L-lysyl(4)-[histone H3] + S-adenosyl-L-homocysteine + H(+). The catalysed reaction is L-lysyl-[protein] + S-adenosyl-L-methionine = N(6)-methyl-L-lysyl-[protein] + S-adenosyl-L-homocysteine + H(+). Histone methyltransferase that specifically monomethylates 'Lys-4' of histone H3. H3 'Lys-4' methylation represents a specific tag for epigenetic transcriptional activation. Plays a central role in the transcriptional activation of genes such as collagenase or insulin. Recruited by IPF1/PDX-1 to the insulin promoter, leading to activate transcription. Also has methyltransferase activity toward non-histone proteins such as CGAS, p53/TP53, TAF10, and possibly TAF7 by recognizing and binding the [KR]-[STA]-K in substrate proteins. Monomethylates 'Lys-189' of TAF10, leading to increase the affinity of TAF10 for RNA polymerase II. Monomethylates 'Lys-372' of p53/TP53, stabilizing p53/TP53 and increasing p53/TP53-mediated transcriptional activation. Monomethylates 'Lys-491' of CGAS, promoting interaction between SGF29 and CGAS. The polypeptide is Histone-lysine N-methyltransferase SETD7 (Setd7) (Mus musculus (Mouse)).